The following is a 1353-amino-acid chain: Ankyrin repeat domain-containing protein 36B (1353 aa).

6 ANK repeats span residues 19 to 48, 52 to 81, 85 to 114, 118 to 147, 151 to 180, and 184 to 213; these read YHLK…DANK, KERT…ELNL, EDRT…DPNI, FGRT…NIEE, NEYQ…NVNA, and LGRS…DVFS. Disordered regions lie at residues 249 to 307 and 349 to 607; these read PINS…KDSV and MGGG…KATS. The segment covering 250 to 259 has biased composition (polar residues); that stretch reads INSNPVSPQK. 2 stretches are compositionally biased toward basic and acidic residues: residues 260-272 and 295-306; these read QRAE…DKDS and PAEKATSDEKDS. Composition is skewed to polar residues over residues 355–367 and 389–400; these read GTVS…ASKT and GTVSSQKQQALK. 2 stretches are compositionally biased toward basic and acidic residues: residues 436-455 and 471-491; these read TSDE…DGEI and SVKE…EKSR. Residues 579-600 show a composition bias toward polar residues; that stretch reads VSNIPTEIKDGQQSGTVSSQKQ. 4 coiled-coil regions span residues 731 to 762, 821 to 908, 937 to 1055, and 1119 to 1344; these read AEQD…QIHS, IKLK…YRIE, SETD…DHDQ, and VFEH…LQHS.

Belongs to the ANKRD36 family.

The protein is Ankyrin repeat domain-containing protein 36B (ANKRD36B) of Homo sapiens (Human).